The primary structure comprises 338 residues: Ornithine carbamoyltransferase (338 aa).

Residues Arg-116 and 143–146 (HPCQ) each bind carbamoyl phosphate. L-ornithine contacts are provided by residues Asn-174, Asp-235, and 239–240 (SM). Positions 275 and 303 each coordinate carbamoyl phosphate.

The protein belongs to the aspartate/ornithine carbamoyltransferase superfamily. OTCase family.

The protein localises to the cytoplasm. It catalyses the reaction carbamoyl phosphate + L-ornithine = L-citrulline + phosphate + H(+). The protein operates within amino-acid biosynthesis; L-arginine biosynthesis; L-arginine from L-ornithine and carbamoyl phosphate: step 1/3. In terms of biological role, reversibly catalyzes the transfer of the carbamoyl group from carbamoyl phosphate (CP) to the N(epsilon) atom of ornithine (ORN) to produce L-citrulline. This is Ornithine carbamoyltransferase from Chlorobaculum tepidum (strain ATCC 49652 / DSM 12025 / NBRC 103806 / TLS) (Chlorobium tepidum).